Consider the following 238-residue polypeptide: Ribonuclease PH (238 aa).

Residues Arg86 and 124 to 126 (GTR) each bind phosphate.

Belongs to the RNase PH family. In terms of assembly, homohexameric ring arranged as a trimer of dimers.

The catalysed reaction is tRNA(n+1) + phosphate = tRNA(n) + a ribonucleoside 5'-diphosphate. Its function is as follows. Phosphorolytic 3'-5' exoribonuclease that plays an important role in tRNA 3'-end maturation. Removes nucleotide residues following the 3'-CCA terminus of tRNAs; can also add nucleotides to the ends of RNA molecules by using nucleoside diphosphates as substrates, but this may not be physiologically important. Probably plays a role in initiation of 16S rRNA degradation (leading to ribosome degradation) during starvation. The chain is Ribonuclease PH from Marinobacter nauticus (strain ATCC 700491 / DSM 11845 / VT8) (Marinobacter aquaeolei).